The primary structure comprises 919 residues: Aminodeoxychorismate synthase, chloroplastic (919 aa).

A chloroplast-targeting transit peptide spans 1 to 45; sequence MNMNFSFCSTSSELSYPSENVLRFSVASRLFSPKWKKSFISLPCR. The region spanning 86–342 is the Glutamine amidotransferase type-1 domain; that stretch reads RTLLIDNYDS…KDITVNYWSR (257 aa). The Nucleophile role is filled by cysteine 172. Active-site residues include histidine 316 and glutamate 318. The interval 436–910 is PABB component; the sequence is IFMELFGKNR…KTRAPANAVM (475 aa).

The protein in the C-terminal section; belongs to the anthranilate synthase component I family.

The protein localises to the plastid. It is found in the chloroplast. The catalysed reaction is chorismate + L-glutamine = 4-amino-4-deoxychorismate + L-glutamate. It functions in the pathway cofactor biosynthesis; tetrahydrofolate biosynthesis; 4-aminobenzoate from chorismate: step 1/2. With respect to regulation, activated by chorismate and inhibited by dihydrofolate and methotrexate. In terms of biological role, bifunctional enzyme that catalyzes the biosynthesis of 4-amino-4-deoxychorismate (ADC) from chorismate and glutamine. In the first step, a glutamine amidotransferase generates ammonia that is channelled between the binding sites of glutamine and chorismate and used along with chorismate in the second step, catalyzed by aminodeoxychorismate synthase, to produce ADC. Required for the synthesis of 4-aminobenzoate (PABA), an important component in tetrahydrofolate biosynthesis. Does not possess ADC lyase activity. The polypeptide is Aminodeoxychorismate synthase, chloroplastic (ADCS) (Arabidopsis thaliana (Mouse-ear cress)).